The primary structure comprises 307 residues: MTKKMGLLVMAYGTPYKESDIEPYYTDIRHGKRPSEEELQDLKDRYEFIGGLSPLAGTTDDQADALVSALNKAYADVEFKLYLGLKHISPFIEDAVEQMHNDGITEAITVVLAPHYSSFSVGSYDKRADEEAAKYGIQLTHVKHYYEQPKFIEYWTNKVNETLAQIPEEEHKDTVLVVSAHSLPKGLIEKNNDPYPQELEHTALLIKEQSNIEHIAIGWQSEGNTGTPWLGPDVQDLTRDLYEKHQYKNFIYTPVGFVCEHLEVLYDNDYECKVVCDDIGANYYRPKMPNTHPLFIGAIVDEIKSIF.

Residues Tyr-12, Arg-29, 45-46 (RY), Ser-53, and Tyr-124 each bind Fe-coproporphyrin III. 2 residues coordinate Fe(2+): His-181 and Glu-263.

The protein belongs to the ferrochelatase family.

The protein resides in the cytoplasm. The catalysed reaction is Fe-coproporphyrin III + 2 H(+) = coproporphyrin III + Fe(2+). It participates in porphyrin-containing compound metabolism; protoheme biosynthesis. Involved in coproporphyrin-dependent heme b biosynthesis. Catalyzes the insertion of ferrous iron into coproporphyrin III to form Fe-coproporphyrin III. This chain is Coproporphyrin III ferrochelatase, found in Staphylococcus aureus (strain COL).